The chain runs to 190 residues: MNFLLSWVHWSLALLLYLHHAKWSQAAPMAEGEHKTHEVVKFMDVYQRSYCRPIETLVDIFQEYPDEIEYIFKPSCVPLMRCGGCCNDEGLECVPTAEFNITMQIMRIKPHQSQHIGEMSFLQHSKCECRPKKDKARQENPCGPCSERRKHLFVQDPQTCKCSCKNTDSRCKARQLELNERTCRCDKPRR.

A signal peptide spans 1–26 (MNFLLSWVHWSLALLLYLHHAKWSQA). Intrachain disulfides connect Cys-51/Cys-93, Cys-82/Cys-127, and Cys-86/Cys-129. Asn-100 is a glycosylation site (N-linked (GlcNAc...) asparagine).

This sequence belongs to the PDGF/VEGF growth factor family. Homodimer; disulfide-linked. Also found as heterodimer with PGF. Interacts with NRP1. Interacts with isoform 2 of BSG. Interacts with CD82; this interaction inhibits VEGFA-mediated signaling pathway.

The protein localises to the secreted. Its function is as follows. Growth factor active in angiogenesis, vasculogenesis and endothelial cell growth. Induces endothelial cell proliferation, promotes cell migration, inhibits apoptosis and induces permeabilization of blood vessels. Binds to the FLT1/VEGFR1 and KDR/VEGFR2 receptors, heparan sulfate and heparin. Binding to NRP1 receptor initiates a signaling pathway needed for motor neuron axon guidance and cell body migration, including for the caudal migration of facial motor neurons from rhombomere 4 to rhombomere 6 during embryonic development. Also binds the DEAR/FBXW7-AS1 receptor. This Equus caballus (Horse) protein is Vascular endothelial growth factor A (VEGFA).